Here is a 162-residue protein sequence, read N- to C-terminus: Cyclic pyranopterin monophosphate synthase (162 aa).

Substrate-binding positions include 75–77 (LCH) and 113–114 (ME). Aspartate 128 is an active-site residue.

This sequence belongs to the MoaC family. As to quaternary structure, homohexamer; trimer of dimers.

The enzyme catalyses (8S)-3',8-cyclo-7,8-dihydroguanosine 5'-triphosphate = cyclic pyranopterin phosphate + diphosphate. The protein operates within cofactor biosynthesis; molybdopterin biosynthesis. Its function is as follows. Catalyzes the conversion of (8S)-3',8-cyclo-7,8-dihydroguanosine 5'-triphosphate to cyclic pyranopterin monophosphate (cPMP). This Burkholderia vietnamiensis (strain G4 / LMG 22486) (Burkholderia cepacia (strain R1808)) protein is Cyclic pyranopterin monophosphate synthase.